Reading from the N-terminus, the 430-residue chain is Chaperone SurA (430 aa).

The first 25 residues, 1-25 (MQIIKTTIATFTAIAFTGAASFTSA), serve as a signal peptide directing secretion. 2 PpiC domains span residues 176 to 277 (SPDY…KLYE) and 286 to 385 (VNQT…KVEE).

It is found in the periplasm. The enzyme catalyses [protein]-peptidylproline (omega=180) = [protein]-peptidylproline (omega=0). Its function is as follows. Chaperone involved in the correct folding and assembly of outer membrane proteins. Recognizes specific patterns of aromatic residues and the orientation of their side chains, which are found more frequently in integral outer membrane proteins. May act in both early periplasmic and late outer membrane-associated steps of protein maturation. This chain is Chaperone SurA, found in Saccharophagus degradans (strain 2-40 / ATCC 43961 / DSM 17024).